The chain runs to 43 residues: MRQFYQHYFTATAKLCWLRWLSVPQRLTMLEGLMQWDDRNSES.

Acts to promote recovery from glucose-phosphate stress due to intracellular accumulation of glucose-6-phosphate caused by disruption of glycolytic flux or in the presence of (toxic) non-metabolizable glucose phosphate analogs. It may do so by inhibiting the transporter activity for glucose uptake (PtsG) as cells that overexpress this protein do not seem to import glucose although they have nearly wild-type levels of PtsG. In Escherichia coli (strain K12), this protein is Putative inhibitor of glucose uptake transporter SgrT (sgrT).